The following is a 227-amino-acid chain: PKHD-type hydroxylase BTH_II1201 (227 aa).

One can recognise a Fe2OG dioxygenase domain in the interval 78 to 178 (KVFPPLFNRY…RVASFFWIQS (101 aa)). Fe cation contacts are provided by histidine 96, aspartate 98, and histidine 159. Arginine 169 is a binding site for 2-oxoglutarate.

Fe(2+) is required as a cofactor. It depends on L-ascorbate as a cofactor.

This chain is PKHD-type hydroxylase BTH_II1201, found in Burkholderia thailandensis (strain ATCC 700388 / DSM 13276 / CCUG 48851 / CIP 106301 / E264).